A 284-amino-acid chain; its full sequence is Shikimate dehydrogenase (NADP(+)) (284 aa).

Shikimate is bound by residues 20 to 22 (SIS) and serine 67. Catalysis depends on lysine 71, which acts as the Proton acceptor. Aspartate 83 contacts NADP(+). Shikimate contacts are provided by asparagine 92 and aspartate 107. NADP(+) is bound by residues 129 to 133 (GAGGA) and isoleucine 227. Tyrosine 229 serves as a coordination point for shikimate. An NADP(+)-binding site is contributed by glycine 250.

The protein belongs to the shikimate dehydrogenase family. Homodimer.

It carries out the reaction shikimate + NADP(+) = 3-dehydroshikimate + NADPH + H(+). The protein operates within metabolic intermediate biosynthesis; chorismate biosynthesis; chorismate from D-erythrose 4-phosphate and phosphoenolpyruvate: step 4/7. Functionally, involved in the biosynthesis of the chorismate, which leads to the biosynthesis of aromatic amino acids. Catalyzes the reversible NADPH linked reduction of 3-dehydroshikimate (DHSA) to yield shikimate (SA). The chain is Shikimate dehydrogenase (NADP(+)) from Streptococcus pneumoniae (strain 70585).